The chain runs to 278 residues: 4-hydroxy-3-methylbut-2-enyl diphosphate reductase (278 aa).

A [4Fe-4S] cluster-binding site is contributed by Cys12. Positions 41 and 74 each coordinate (2E)-4-hydroxy-3-methylbut-2-enyl diphosphate. 2 residues coordinate dimethylallyl diphosphate: His41 and His74. His41 and His74 together coordinate isopentenyl diphosphate. Residue Cys96 participates in [4Fe-4S] cluster binding. A (2E)-4-hydroxy-3-methylbut-2-enyl diphosphate-binding site is contributed by His124. His124 lines the dimethylallyl diphosphate pocket. Position 124 (His124) interacts with isopentenyl diphosphate. Glu126 (proton donor) is an active-site residue. A (2E)-4-hydroxy-3-methylbut-2-enyl diphosphate-binding site is contributed by Thr161. A [4Fe-4S] cluster-binding site is contributed by Cys189. (2E)-4-hydroxy-3-methylbut-2-enyl diphosphate is bound by residues Ser217, Asn219, and Ser261. Residues Ser217, Asn219, and Ser261 each contribute to the dimethylallyl diphosphate site. Residues Ser217, Asn219, and Ser261 each coordinate isopentenyl diphosphate.

Belongs to the IspH family. [4Fe-4S] cluster serves as cofactor.

The enzyme catalyses isopentenyl diphosphate + 2 oxidized [2Fe-2S]-[ferredoxin] + H2O = (2E)-4-hydroxy-3-methylbut-2-enyl diphosphate + 2 reduced [2Fe-2S]-[ferredoxin] + 2 H(+). It carries out the reaction dimethylallyl diphosphate + 2 oxidized [2Fe-2S]-[ferredoxin] + H2O = (2E)-4-hydroxy-3-methylbut-2-enyl diphosphate + 2 reduced [2Fe-2S]-[ferredoxin] + 2 H(+). The protein operates within isoprenoid biosynthesis; dimethylallyl diphosphate biosynthesis; dimethylallyl diphosphate from (2E)-4-hydroxy-3-methylbutenyl diphosphate: step 1/1. It functions in the pathway isoprenoid biosynthesis; isopentenyl diphosphate biosynthesis via DXP pathway; isopentenyl diphosphate from 1-deoxy-D-xylulose 5-phosphate: step 6/6. Its function is as follows. Catalyzes the conversion of 1-hydroxy-2-methyl-2-(E)-butenyl 4-diphosphate (HMBPP) into a mixture of isopentenyl diphosphate (IPP) and dimethylallyl diphosphate (DMAPP). Acts in the terminal step of the DOXP/MEP pathway for isoprenoid precursor biosynthesis. The sequence is that of 4-hydroxy-3-methylbut-2-enyl diphosphate reductase from Anaeromyxobacter sp. (strain K).